A 648-amino-acid chain; its full sequence is Golgin subfamily A member 8G (648 aa).

Residues 1-11 show a composition bias toward pro residues; sequence MWPQARLPPHP. 2 disordered regions span residues 1-84 and 119-139; these read MWPQ…SATL and NKQV…KQKA. Over residues 50–62 the composition is skewed to polar residues; that stretch reads TNGSIHETATSGG. Coiled coils occupy residues 105-160, 223-275, and 318-424; these read VSQL…LNTD, LEQS…MSQE, and EVEL…QQKQ. Residues 121 to 139 are compositionally biased toward basic and acidic residues; it reads QVEHQLEEEKKANNEKQKA. Disordered stretches follow at residues 356–376, 434–461, 508–549, and 600–624; these read LREQ…QEER, ALPG…SIPQ, PITK…GVAA, and PVQG…QDHQ. Basic and acidic residues predominate over residues 441–453; that stretch reads GGGHLDSEGEEAP. Residues 521-534 are compositionally biased toward gly residues; the sequence is PGGGHHQAGPGQGG.

It belongs to the GOLGA8 family.

This chain is Golgin subfamily A member 8G, found in Homo sapiens (Human).